Consider the following 95-residue polypeptide: MSRRCELTGKGVQVGNNVSHANNKTKRRFLPNLNDVTLMSETLGRGFKLRISAAALRTVDHRGGLDSFLAKAKDAELSEKALKIKKDIAKAQAAA.

It belongs to the bacterial ribosomal protein bL28 family.

This is Large ribosomal subunit protein bL28 from Dinoroseobacter shibae (strain DSM 16493 / NCIMB 14021 / DFL 12).